Reading from the N-terminus, the 451-residue chain is Photosystem II CP43 reaction center protein (451 aa).

The Cytoplasmic segment spans residues 1-46 (ATNRDQESSGFAWWAGNARLINLSGKLLGAHVAHAGLIVFWAGAMT). 3 residues coordinate chlorophyll a: W13, L27, and A30. The chain crosses the membrane as a helical span at residues 47–71 (LFELAHFIPEKPMYEQGLILIPHIA). Topologically, residues 72–111 (TLGWGVGPGGEVVDTFPFFVVGVVHLISSAVLGFGGVYHA) are lumenal. Residues V92 and G106 each contribute to the chlorophyll a site. A helical transmembrane segment spans residues 112 to 133 (IRGPETLEEYSSFFGYDWKDKN). Residues 134-155 (KMTTILGFHLIVLGIGALLLVA) lie on the Cytoplasmic side of the membrane. I138 contributes to the chlorophyll a binding site. A helical transmembrane segment spans residues 156 to 178 (KAMFFGGLYDTWAPGGGDVRVIT). Over 179–232 (NPTLDPRVIFGYLLKSPFGGEGWIVSVNNLEDVVGGHIWIGLICIAGGIWHILT) the chain is Lumenal. V211 and G225 together coordinate chlorophyll a. Residues 233–253 (TPFGWARRAFIWSGEAYLSYS) traverse the membrane as a helical segment. Over 254–268 (LGALSMMGFIATCFV) the chain is Cytoplasmic. Residues 269 to 290 (WFNNTVYPSEFYGPTGPEASQA) form a helical membrane-spanning segment. Residues 291–424 (QAMTFLIRDQ…FLVGHLWHAG (134 aa)) are Lumenal-facing. E345 contacts [CaMn4O5] cluster. Residues L404, F415, and G418 each contribute to the chlorophyll a site. Residues 425–449 (RARAAAAGFEKGIDRESEPVLSMPS) traverse the membrane as a helical segment. The Cytoplasmic portion of the chain corresponds to 450 to 451 (LD).

The protein belongs to the PsbB/PsbC family. PsbC subfamily. PSII is composed of 1 copy each of membrane proteins PsbA, PsbB, PsbC, PsbD, PsbE, PsbF, PsbH, PsbI, PsbJ, PsbK, PsbL, PsbM, PsbT, PsbX, PsbY, PsbZ, Psb30/Ycf12, peripheral proteins PsbO, CyanoQ (PsbQ), PsbU, PsbV and a large number of cofactors. It forms dimeric complexes. Binds multiple chlorophylls and provides some of the ligands for the Ca-4Mn-5O cluster of the oxygen-evolving complex. It may also provide a ligand for a Cl- that is required for oxygen evolution. PSII binds additional chlorophylls, carotenoids and specific lipids. is required as a cofactor.

Its subcellular location is the cellular thylakoid membrane. In terms of biological role, one of the components of the core complex of photosystem II (PSII). It binds chlorophyll and helps catalyze the primary light-induced photochemical processes of PSII. PSII is a light-driven water:plastoquinone oxidoreductase, using light energy to abstract electrons from H(2)O, generating O(2) and a proton gradient subsequently used for ATP formation. The protein is Photosystem II CP43 reaction center protein of Thermostichus vulcanus (Synechococcus vulcanus).